The primary structure comprises 165 residues: MADFDEIYEEEEDEERALEEQLLKYSPDPVVVRGSGHVTVFGLSNKFESEFPSSLTGKVAPEEFKASINRVNSCLRKNLPVNVRWLLCGCLCCCCTLGCSMWPVICLSKRTRRSIEKLLEWENNRLYHKLCLHWRLSKRKCETNNMMEYVILIEFLPKTPIFRPD.

Residues methionine 1–serine 26 adopt a coiled-coil conformation. The CHIC motif (Cys-rich) motif lies at cysteine 88–cysteine 106.

This sequence belongs to the CHIC family. Palmitoylation in the CHIC motif is required for membrane association.

It is found in the membrane. It localises to the golgi apparatus. The chain is Cysteine-rich hydrophobic domain-containing protein 2 (Chic2) from Mus musculus (Mouse).